Consider the following 170-residue polypeptide: Ureidoglycolate lyase (170 aa).

The protein belongs to the ureidoglycolate lyase family. As to quaternary structure, homodimer. Requires Ni(2+) as cofactor.

It carries out the reaction (S)-ureidoglycolate = urea + glyoxylate. It functions in the pathway nitrogen metabolism; (S)-allantoin degradation. In terms of biological role, catalyzes the catabolism of the allantoin degradation intermediate (S)-ureidoglycolate, generating urea and glyoxylate. Involved in the utilization of allantoin as nitrogen source. This Stutzerimonas stutzeri (strain A1501) (Pseudomonas stutzeri) protein is Ureidoglycolate lyase.